An 844-amino-acid chain; its full sequence is MELWRQCTHWLIQCRVLPPSHRVTWDGAQVCELAQALRDGVLLCQLLNNLLPHAINLREVNLRPQMSQFLCLKNIRTFLSTCYEKFGLKRSELFEAFDLFDVQDFGKVIYTLSALSWTPIAQNKGIMPFPTEESVGDEDIYSGLSDQIDDTVEEDEDLYDCVENEEAEGDEVYEDLMRSEPVPMPPKMTEYDKRCCCLREIQQTEEKYTDTLGSIQQHFMKPLQRFLKPQDVEIIFINIEDLLRVHTHFLKEMKEALANPGASTLYQVFIKYKERFLIYGRYCSQVESASKHLDRVATAREDVQMKLEECSQRANNGRFTLRDLLMVPMQRVLKYHLLLQELVKHTQDAMEKDNLRLALDAMRDLAQCVNEVKRDNETLRQITNFQLSIENLDQSLAHYGRPKIDGELKITSVERRSKMDRYAFLLDKALLICKRRGDTYDLKDFVNLHSFQVRDDSSGERDNKKWTHMFLLIEDQGAQGYELFFKTRELKKKWMEQFEMAISNIYPENATANGHDFQMFSFEETTSCKACQMLLRGTFYQGYRCQRCRAPAHKECLGRVPPCGRHGQDYSGTMKKDKPHRRAQDKKRNELGLPKMEVCQEYYGLPPPPGAIGPFLRLNPGDIVELTKAEAEQNWWEGRNISTNEVGWFPCNRVKPYVHGPPQDLSVHLWYAGPMERAGAESILTNRSDGTFLVRQRVKDAAEFAISIKYNVEVKHIKIMTAEGLYRITEKKAFRGLTELVEFYQQNSLKDCFKSLDTTLQFPFKEPERRAINKPSAGSIKIFGTAKARYDFCARDRSELSLKEGDIVKILNKKGQQGWWRGEIYGRIGWFPSNYVEEDYSEYC.

The 119-residue stretch at 1–119 folds into the Calponin-homology (CH) domain; sequence MELWRQCTHW…YTLSALSWTP (119 aa). One can recognise a DH domain in the interval 193–372; that stretch reads KRCCCLREIQ…RDLAQCVNEV (180 aa). One can recognise a PH domain in the interval 401–503; it reads RPKIDGELKI…WMEQFEMAIS (103 aa). The segment at 514–563 adopts a Phorbol-ester/DAG-type zinc-finger fold; the sequence is GHDFQMFSFEETTSCKACQMLLRGTFYQGYRCQRCRAPAHKECLGRVPPC. A disordered region spans residues 567–589; sequence GQDYSGTMKKDKPHRRAQDKKRN. Positions 591 to 659 constitute an SH3 1 domain; the sequence is LGLPKMEVCQ…PCNRVKPYVH (69 aa). Residues 670-764 form the SH2 domain; the sequence is WYAGPMERAG…SLDTTLQFPF (95 aa). The SH3 2 domain occupies 781 to 841; that stretch reads KIFGTAKARY…PSNYVEEDYS (61 aa). Tyrosine 825 and tyrosine 843 each carry phosphotyrosine.

In terms of assembly, interacts with SHB. Interacts with APS, DOCK2, GRB2, GRB3, DOCK2, SLA, TEC and ZNF655/VIK. Interacts with SIAH2; without leading to its degradation. Associates with BLNK, PLCG1, GRB2 and NCK1 in a B-cell antigen receptor-dependent fashion. Interacts with CBLB; which inhibits tyrosine phosphorylation and down-regulates activity. May interact with CCPG1. Interacts with CLNK. Interacts with THEMIS2. Interacts with NEK3 and this interaction is prolactin-dependent. Interacts with ITK. Interacts with PTK2B/PYK2. Interacts with HCK. Interacts with PTK2B/PYK2. Interacts (via SH2 domain) with SYK. Interacts with ANKRD54. Interacts with CD6. Interacts with LCP2; this interaction plays a role in TCR-mediated cytokine production. Post-translationally, phosphorylated by FYN. Phosphorylated on tyrosine residues by HCK in response to IFNG and bacterial lipopolysaccharide (LPS).

Functionally, couples tyrosine kinase signals with the activation of the Rho/Rac GTPases, thus leading to cell differentiation and/or proliferation. This is Proto-oncogene vav (VAV1) from Bos taurus (Bovine).